The chain runs to 493 residues: Polyamine aminopropyltransferase 2 (493 aa).

Helical transmembrane passes span 9–29 (LCIFFTGFAGIVAEYSLATLA), 32–52 (LLGNAVLQWSVVISIFLLSMG), 68–88 (LAFVLAELFLSLLVPFSVPIA), 101–121 (VIYGLSFVIGSLIGLEIPLAV), 137–157 (VLEKDYLGSVPAGLLYAYLFL), 161–181 (GLPLTAILAGFFNLISAFLLV), and 188–208 (KFLKFLAIFTFFLLATYAVGH). The interval 187–448 (KKFLKFLAIF…PLNFENFELK (262 aa)) is spermidine synthase. A PABS domain is found at 202–437 (ATYAVGHKRI…GEWGMVIGSK (236 aa)). Glutamine 233 contributes to the S-methyl-5'-thioadenosine binding site. Residues histidine 263 and aspartate 287 each contribute to the spermidine site. Residues aspartate 306 and 340-341 (DA) each bind S-methyl-5'-thioadenosine. The active-site Proton acceptor is the aspartate 358.

It belongs to the spermidine/spermine synthase family. In terms of assembly, homodimer or homotetramer.

The protein resides in the cell membrane. The enzyme catalyses S-adenosyl 3-(methylsulfanyl)propylamine + putrescine = S-methyl-5'-thioadenosine + spermidine + H(+). The protein operates within amine and polyamine biosynthesis; spermidine biosynthesis; spermidine from putrescine: step 1/1. Functionally, catalyzes the irreversible transfer of a propylamine group from the amino donor S-adenosylmethioninamine (decarboxy-AdoMet) to putrescine (1,4-diaminobutane) to yield spermidine. This is Polyamine aminopropyltransferase 2 from Aquifex aeolicus (strain VF5).